The sequence spans 7192 residues: Nonribosomal peptide synthetase gloA (7192 aa).

The span at M1–G48 shows a compositional bias: polar residues. The segment at M1 to D52 is disordered. A Carrier 1 domain is found at H105–P181. Position 142 is an O-(pantetheine 4'-phosphoryl)serine (S142). Residues E239–P634 form a condensation 1 region. The tract at residues Q675–S1047 is adenylation 1. Positions A1190–L1266 constitute a Carrier 2 domain. S1227 carries the post-translational modification O-(pantetheine 4'-phosphoryl)serine. The segment at E1316–E1736 is condensation 2. The segment at Q1758–R2154 is adenylation 2. The region spanning A2288–S2364 is the Carrier 3 domain. Position 2325 is an O-(pantetheine 4'-phosphoryl)serine (S2325). Residues V2407–I2829 form a condensation 3 region. An adenylation 3 region spans residues Y2849–R3245. The Carrier 4 domain occupies T3378–R3455. Residue S3415 is modified to O-(pantetheine 4'-phosphoryl)serine. A condensation 4 region spans residues E3502–I3891. Residues Q3920–R4320 are adenylation 4. The Carrier 5 domain occupies L4453–K4529. O-(pantetheine 4'-phosphoryl)serine is present on S4490. The interval E4574–H4971 is condensation 5. The tract at residues D5013–R5414 is adenylation 5. The Carrier 6 domain occupies A5551–S5627. At S5588 the chain carries O-(pantetheine 4'-phosphoryl)serine. The condensation 6 stretch occupies residues E5674 to S6071. An adenylation 6 region spans residues Q6111–R6507. The Carrier 7 domain maps to N6645–L6721. An O-(pantetheine 4'-phosphoryl)serine modification is found at S6682. The segment at N6795–L7178 is condensation 7.

It belongs to the NRP synthetase family.

It participates in mycotoxin biosynthesis. Functionally, nonribosomal peptide synthetase; part of the gene cluster that mediates the biosynthesis of pneumocandins, lipohexapeptides of the echinocandin family that prevent fungal cell wall formation by non-competitive inhibition of beta-1,3-glucan synthase. The 10,12-dimethylmyristoyl side chain is synthesized by the reducing polyketide synthase gloL/GLPKS4. The thioesterase gloN/GLHYD exclusively interacts with gloL/GLPKS4 to maintain turnover of the polyketide side chain. The 10R,12S-dimethylmyristic acid is then transferred to the first thiolation domain of the nonribosomal peptide synthetase gloA/GLNRPS4 by the acyl-AMP ligase gloD/GLligase, followed by its acylation to L-ornithine to trigger elongation of the cyclic hexapeptide. L-ornithine, 4R-hydroxyl-L-proline (generated from L-proline by the dioxygenase gloF/GLOXY2), 3S-hydroxyl-L-homotyrosine (generated by gloG/GLHtyB, gloH/GLHtyA, gloI/GLHtyC, gloJ/GLHtyD and hydroxylated at C-3 by the dioxygenase gloM/GLOXY1), 3R-hydroxyl-L-glutamine (generated from L-glutamine probably by the dioxygenase gloE/GLOXY3) and 3S-hydroxyl-L-proline (generated from L-proline by the dioxygenase gloF/GLOXY2 to yield pneumocandin B0), or 3S-hydroxyl-4S-methyl-L-proline (generated from L-leucine by the dioxygenase gloC/GLOXY4 to yield pneumocandin A0) are sequentially added to the growing chain. The last C domain of gloA/GLNRPS4 is proposed to be responsible for cyclization by condensation to form the peptide bond between L-ornithine and 3S-hydroxyl-4S-methyl-L-proline (for pneumocandin A0) or 3S-hydroxyl-L-proline (for pneumocandin B0). Finally, the subsequent C-4 hydroxylation of 3S-hydroxyl-L-homotyrosine and L-ornithine dihydroxylation at C-4 and C-5 are performed by the cytochrome P450 monooxygenases gloP/GLP450-1 and gloO/GLP450-2, respectively. This is Nonribosomal peptide synthetase gloA from Glarea lozoyensis (strain ATCC 20868 / MF5171).